The chain runs to 154 residues: Superoxide dismutase [Cu-Zn] (154 aa).

His47, His49, and His64 together coordinate Cu cation. The cysteines at positions 58 and 147 are disulfide-linked. His64, His72, His81, and Asp84 together coordinate Zn(2+). Residue His121 participates in Cu cation binding. Arg144 is a binding site for substrate.

Belongs to the Cu-Zn superoxide dismutase family. As to quaternary structure, homodimer. Requires Cu cation as cofactor. Zn(2+) is required as a cofactor.

The protein resides in the cytoplasm. The enzyme catalyses 2 superoxide + 2 H(+) = H2O2 + O2. Its function is as follows. Destroys radicals which are normally produced within the cells and which are toxic to biological systems. This is Superoxide dismutase [Cu-Zn] (SOD1) from Candida albicans (Yeast).